We begin with the raw amino-acid sequence, 557 residues long: Protein NRT1/ PTR FAMILY 5.10 (557 aa).

2 helical membrane-spanning segments follow: residues 49-67 and 79-99; these read FAYYGISSNLITYLTGPLG and AWSGTASLLPLLGAFVADSFL. Position 104 is a phosphothreonine (T104). 10 helical membrane passes run 105–125, 144–164, 186–206, 215–235, 320–340, 365–385, 401–421, 443–463, 479–499, and 526–546; these read ILAASALYIVGLGVLTLSAMI, VITFFSALYLVALAQGGHKPC, SFFNWWYFGMCFGTLTTLWVL, WALGFGIPCIAMVVALVVLLL, APIWLTCLVYAVVFAQSPTFF, FISLSIVIFIPIYDRVLIPIA, IGTGIFLSFLAMVVAALVEMK, VWWLVPQYVLFGITDVFAMVG, VGLALYLSIFGIGNFLSSFMI, and YFYWLLACLSFIGLASYLYVA.

This sequence belongs to the major facilitator superfamily. Proton-dependent oligopeptide transporter (POT/PTR) (TC 2.A.17) family. Expressed in shoots, roots and stems. Detected in leaves, flowers and siliques.

The protein localises to the membrane. The sequence is that of Protein NRT1/ PTR FAMILY 5.10 (NPF5.10) from Arabidopsis thaliana (Mouse-ear cress).